We begin with the raw amino-acid sequence, 255 residues long: Small ribosomal subunit protein eS4 (255 aa).

The S4 RNA-binding domain occupies 43–115 (IPLLILVRDV…PTRFFTLHPI (73 aa)).

The protein belongs to the eukaryotic ribosomal protein eS4 family.

This Hyperthermus butylicus (strain DSM 5456 / JCM 9403 / PLM1-5) protein is Small ribosomal subunit protein eS4.